Reading from the N-terminus, the 77-residue chain is Conotoxin ArMKLT2-0122 (77 aa).

Positions 1–22 (MKLTCVLIVAVLFLTACQLIAA) are cleaved as a signal peptide. A propeptide spanning residues 23-44 (DDSRDLKRFSRRKMRDGMLNTK) is cleaved from the precursor. Intrachain disulfides connect Cys50–Cys65, Cys57–Cys68, and Cys64–Cys73.

It belongs to the conotoxin O1 superfamily. Expressed by the venom duct.

It is found in the secreted. The polypeptide is Conotoxin ArMKLT2-0122 (Conus arenatus (Sand-dusted cone)).